The following is a 205-amino-acid chain: Ras-related protein RABD1 (205 aa).

Serine 2 carries the post-translational modification N-acetylserine. GTP contacts are provided by residues 15 to 23 (GDSSVGKSC), 33 to 40 (YIDSYIST), 63 to 67 (DTAGQ), 121 to 124 (NKND), and 151 to 153 (SAK). The short motif at 37–45 (YISTIGVDF) is the Effector region element. Polar residues-rich tracts occupy residues 174 to 186 (GSQTNANKTSGPG) and 194 to 205 (PIQQNNGGCCGQ). The interval 174–205 (GSQTNANKTSGPGTVQMKGQPIQQNNGGCCGQ) is disordered. S-geranylgeranyl cysteine attachment occurs at residues cysteine 202 and cysteine 203.

It belongs to the small GTPase superfamily. Rab family. In terms of assembly, does not interact with GC5. Interacts with XI-2/MYA2.

It localises to the golgi apparatus. It is found in the trans-Golgi network membrane. Its subcellular location is the golgi apparatus membrane. Functionally, protein transport. Regulator of membrane traffic from the Golgi apparatus towards the endoplasmic reticulum (ER). The protein is Ras-related protein RABD1 (RABD1) of Arabidopsis thaliana (Mouse-ear cress).